Reading from the N-terminus, the 333-residue chain is GTP 3',8-cyclase (333 aa).

The Radical SAM core domain occupies 7–221 (KFGRVHDYIR…FEACNEAGYE (215 aa)). Arg16 lines the GTP pocket. [4Fe-4S] cluster contacts are provided by Cys23 and Cys27. Tyr29 lines the S-adenosyl-L-methionine pocket. Cys30 serves as a coordination point for [4Fe-4S] cluster. Position 66 (Arg66) interacts with GTP. Gly70 contacts S-adenosyl-L-methionine. A GTP-binding site is contributed by Thr97. Ser121 serves as a coordination point for S-adenosyl-L-methionine. Lys158 lines the GTP pocket. Position 192 (Met192) interacts with S-adenosyl-L-methionine. Residues Cys257 and Cys260 each coordinate [4Fe-4S] cluster. GTP is bound at residue 262–264 (RLR). Cys274 provides a ligand contact to [4Fe-4S] cluster.

Belongs to the radical SAM superfamily. MoaA family. As to quaternary structure, monomer and homodimer. Requires [4Fe-4S] cluster as cofactor.

It carries out the reaction GTP + AH2 + S-adenosyl-L-methionine = (8S)-3',8-cyclo-7,8-dihydroguanosine 5'-triphosphate + 5'-deoxyadenosine + L-methionine + A + H(+). Its pathway is cofactor biosynthesis; molybdopterin biosynthesis. In terms of biological role, catalyzes the cyclization of GTP to (8S)-3',8-cyclo-7,8-dihydroguanosine 5'-triphosphate. In Listeria monocytogenes serotype 4b (strain CLIP80459), this protein is GTP 3',8-cyclase.